A 294-amino-acid chain; its full sequence is Acetylglutamate kinase (294 aa).

Residues 63–64 (GG), Arg-85, and Asn-188 each bind substrate.

This sequence belongs to the acetylglutamate kinase family. ArgB subfamily.

The protein localises to the cytoplasm. It carries out the reaction N-acetyl-L-glutamate + ATP = N-acetyl-L-glutamyl 5-phosphate + ADP. It participates in amino-acid biosynthesis; L-arginine biosynthesis; N(2)-acetyl-L-ornithine from L-glutamate: step 2/4. Its function is as follows. Catalyzes the ATP-dependent phosphorylation of N-acetyl-L-glutamate. This chain is Acetylglutamate kinase, found in Methanococcus maripaludis (strain C6 / ATCC BAA-1332).